Consider the following 313-residue polypeptide: Cytochrome c biogenesis protein CcsA (313 aa).

8 helical membrane-spanning segments follow: residues 9-29, 44-64, 71-91, 111-131, 143-163, 217-237, 244-264, and 278-298; these read ILTH…LITF, GIIV…VSSG, LYES…IPYF, GFAT…VPAL, MILG…LLVI, VISL…VWAN, WNWD…AIYL, and AIVA…VNLL.

This sequence belongs to the CcmF/CycK/Ccl1/NrfE/CcsA family. In terms of assembly, may interact with Ccs1.

The protein localises to the plastid. The protein resides in the chloroplast thylakoid membrane. Functionally, required during biogenesis of c-type cytochromes (cytochrome c6 and cytochrome f) at the step of heme attachment. The protein is Cytochrome c biogenesis protein CcsA of Solanum lycopersicum (Tomato).